A 95-amino-acid polypeptide reads, in one-letter code: Small ribosomal subunit protein bS20 (95 aa).

The protein belongs to the bacterial ribosomal protein bS20 family.

Binds directly to 16S ribosomal RNA. This chain is Small ribosomal subunit protein bS20, found in Ehrlichia canis (strain Jake).